A 264-amino-acid polypeptide reads, in one-letter code: Hydroxyethylthiazole kinase (264 aa).

Met-52 is a substrate binding site. ATP contacts are provided by Arg-127 and Thr-173. Gly-200 is a binding site for substrate.

This sequence belongs to the Thz kinase family. Mg(2+) is required as a cofactor.

The enzyme catalyses 5-(2-hydroxyethyl)-4-methylthiazole + ATP = 4-methyl-5-(2-phosphooxyethyl)-thiazole + ADP + H(+). It participates in cofactor biosynthesis; thiamine diphosphate biosynthesis; 4-methyl-5-(2-phosphoethyl)-thiazole from 5-(2-hydroxyethyl)-4-methylthiazole: step 1/1. Its function is as follows. Catalyzes the phosphorylation of the hydroxyl group of 4-methyl-5-beta-hydroxyethylthiazole (THZ). The sequence is that of Hydroxyethylthiazole kinase from Pectobacterium carotovorum subsp. carotovorum (strain PC1).